Consider the following 154-residue polypeptide: Superoxide dismutase [Cu-Zn] (154 aa).

Residues His-47, His-49, and His-64 each coordinate Cu cation. The cysteines at positions 58 and 147 are disulfide-linked. Zn(2+) is bound by residues His-64, His-72, His-81, and Asp-84. His-121 contacts Cu cation.

Belongs to the Cu-Zn superoxide dismutase family. As to quaternary structure, homodimer. It depends on Cu cation as a cofactor. Zn(2+) is required as a cofactor.

The protein resides in the cytoplasm. The catalysed reaction is 2 superoxide + 2 H(+) = H2O2 + O2. Functionally, destroys radicals which are normally produced within the cells and which are toxic to biological systems. This is Superoxide dismutase [Cu-Zn] (SODCC) from Pinus sylvestris (Scotch pine).